Here is a 261-residue protein sequence, read N- to C-terminus: Carnitinyl-CoA dehydratase (261 aa).

E111 (nucleophile) is an active-site residue. The active-site Proton acceptor is E131.

This sequence belongs to the enoyl-CoA hydratase/isomerase family.

The catalysed reaction is (R)-carnitinyl-CoA = crotonobetainyl-CoA + H2O. It functions in the pathway amine and polyamine metabolism; carnitine metabolism. Its function is as follows. Catalyzes the reversible dehydration of L-carnitinyl-CoA to crotonobetainyl-CoA. This chain is Carnitinyl-CoA dehydratase, found in Salmonella enteritidis PT4 (strain P125109).